Here is a 1107-residue protein sequence, read N- to C-terminus: Unconventional myosin-Ie (1107 aa).

The Myosin motor domain maps to 19–692 (SGVDDMVLLS…SLFLLEEMRE (674 aa)). 112-119 (GESGAGKT) contributes to the ATP binding site. Residues 581 to 591 (PHYIRCIKPNE) form an actin-binding region. The 30-residue stretch at 695–724 (YDGYARVIQKTWRKFVARKKYVQMREDASD) folds into the IQ domain. The 193-residue stretch at 730–922 (KERRRNSINR…NKVLQVSIGP (193 aa)) folds into the TH1 domain. A disordered region spans residues 920-1052 (IGPGLPKNAR…KPQPKPKPQV (133 aa)). Composition is skewed to polar residues over residues 933–949 (RNTV…NNNY), 977–989 (SGNQ…SLYT), and 998–1012 (RQQS…QTPE). Phosphoserine is present on serine 1001. Residues 1034–1051 (RPPPAGGRPKPQPKPKPQ) show a composition bias toward pro residues. The SH3 domain maps to 1050–1107 (PQVPQCKALYAYDAQDTDELSFNANDVIDIIKEDPSGWWTGRLRGKQGLFPNNYVTKI).

This sequence belongs to the TRAFAC class myosin-kinesin ATPase superfamily. Myosin family. In terms of assembly, interacts with CALM and F-actin. Interacts (via SH3 domain) with SYNJ1, DNM1 and DNM2. Interacts with ARL14EP. Interacts with CARMIL1. As to expression, detected in brain stem, brain cortex, cerebellum, stomach, colon, heart, lung, liver, spleen and kidney. Detected in utricle, cochlea, outer hair cell bundle cuticular plate and vestibular epithelia (at protein level). Detected in cochlea and vestibular tissues. Detected in kidney, lung, spleen and intestine.

The protein localises to the cytoplasm. It localises to the cytoskeleton. It is found in the cytoplasmic vesicle. The protein resides in the clathrin-coated vesicle. Its subcellular location is the cell junction. Its function is as follows. Myosins are actin-based motor molecules with ATPase activity. Unconventional myosins serve in intracellular movements. Their highly divergent tails bind to membranous compartments, which are then moved relative to actin filaments. Binds to membranes containing anionic phospholipids via its tail domain. Involved in clathrin-mediated endocytosis and intracellular movement of clathrin-coated vesicles. Required for normal morphology of the glomerular basement membrane, normal development of foot processes by kidney podocytes and normal kidney function. In dendritic cells, may control the movement of class II-containing cytoplasmic vesicles along the actin cytoskeleton by connecting them with the actin network via ARL14EP and ARL14. This chain is Unconventional myosin-Ie (Myo1e), found in Rattus norvegicus (Rat).